An 814-amino-acid chain; its full sequence is MTSSARNGSPSPSPALPSTTTPAEQESRNTMTTANNPGDWDSSESRPQPLSNGKGVGNGMVANGHQRPSTSSTAASANNASAKDPLRPRRKKAKRACFACQRAHLTCGDERPCQRCIKRGLQDTCHDGVRKKAKYLHDAPNEALIPGIRGNLYSQAQAARNKINTNSQQRNGTNSNSDNNSTNTNSNNKPSHQDVSTNFFSTPSTNNYNTVYTQAKSRQSQHMPSRVMQDATMNPSAFQAQPPASPTFDLSSNPQNHTLSPSMAQNSGTTPSSSASQNPDPYGPTFFDPSHPALFNFDIASMNFGNRYGALEFGMLGHLATGAGDTPPSDSATRRGSIGRSSGTFTVQNFGEGSSNQSPFLFGGDPVLNDWNPAGQGQTNSRNIYNQNSVSGQMADHPHAFAIESAPMNFASPSSTESPQMTTVTQFDDPSVNFSSRTTLMPPTNTQHQQQPQPPRISTPSLKNMQVGVKRRYRSPSSIYESVKEPYSYTSGFHSLTAFIQRRFSPQKTLQIAKALASIRPSFIATTKTLNQDDLIFMEKCFQRTLWEYEDFIDACGTPTIVCRRTGEIAAVGKEFSILTGWKKEVLLGKEPNLNVNTGGSSSSGVSSRGSSTYNSRNSATMTVMDNQSLPTGRTQPVFLAELLDDDSVIEFYEDFAKLAFGDSRGSVMTTCKLLKYKTKEDGVGLFRNSNGEVSAAGGGGTAADDTDANDGAGAGAGDGTTSAVNGVSNGSGNNATNVNANGNVNVIPNDLSGASSMKLSPKQAWGKSRIAGEAGMNQLGFRDGKVECSYCWTVKRDVFDIPMLIVMNFLPCI.

Residues Met-1 to Arg-90 form a disordered region. The segment covering Ser-69–Lys-83 has biased composition (low complexity). Residues Cys-97–Cys-125 constitute a DNA-binding region (zn(2)-C6 fungal-type). Disordered regions lie at residues Asn-164–Tyr-208, Ser-236–Phe-287, Ala-323–Ile-384, Pro-442–Ser-461, Thr-598–Arg-617, and Ser-695–Val-739. Positions Asn-171–Asn-188 are enriched in low complexity. Composition is skewed to polar residues over residues Lys-189–Tyr-208, Phe-248–Pro-279, Gly-339–Pro-359, and Gly-375–Ile-384. A compositionally biased stretch (low complexity) spans Pro-442–Gln-451. Low complexity predominate over residues Gly-720–Val-739.

This sequence belongs to the ERT1/acuK family.

The protein localises to the nucleus. Transcription factor which regulates nonfermentable carbon utilization. Activator of gluconeogenetic genes. This Paracoccidioides brasiliensis (strain Pb18) protein is Transcription activator of gluconeogenesis PADG_03802.